Consider the following 472-residue polypeptide: Gamma-glutamylputrescine synthetase PuuA (472 aa).

In terms of domain architecture, GS beta-grasp spans 35–129; sequence PNTQYVDVLL…MLLTMVDEDG (95 aa). The GS catalytic domain occupies 136–472; that stretch reads PRNVLNRLWQ…TEIEWMLKNA (337 aa).

Belongs to the glutamine synthetase family. Dodecamer. The cofactor is Mg(2+). Requires Mn(2+) as cofactor.

The catalysed reaction is putrescine + L-glutamate + ATP = gamma-L-glutamylputrescine + ADP + phosphate + H(+). The protein operates within amine and polyamine degradation; putrescine degradation; 4-aminobutanoate from putrescine: step 1/4. Functionally, involved in the breakdown of putrescine. Catalyzes the ATP-dependent gamma-glutamylation of putrescine, producing gamma-L-glutamylputrescine. Absolutely essential to utilize putrescine as both nitrogen and carbon sources and to decrease the toxicity of putrescine, which can lead to inhibition of cell growth and protein synthesis. In vitro is also able to use several diamines, and spermidine and spermine, instead of putrescine, but with a much lower activity, and cannot catalyze the gamma-glutamylation of ornithine or GABA. The chain is Gamma-glutamylputrescine synthetase PuuA from Escherichia coli (strain K12).